The primary structure comprises 176 residues: Secreted LysM effector ELP2 (176 aa).

Positions 1–18 (MQFSIFTVLAAAASFAVA) are cleaved as a signal peptide. Positions 31 to 45 (TSAAANPSPTTSGAA) are enriched in low complexity. The interval 31-50 (TSAAANPSPTTSGAANPSPT) is disordered. In terms of domain architecture, LysM 1 spans 58 to 102 (HKTTVKAGQTLTTIAERFHSGICDIAWQNKLENPNVIFVGQVLLV). N-linked (GlcNAc...) asparagine glycosylation occurs at Asn-111. The LysM 2 domain occupies 129 to 173 (ATYTIKSGDTFFAVAQSLGITTDSLTGANPGVVPENLQIDQVINV).

It belongs to the secreted LysM effector family. As to quaternary structure, forms homodimers in a chitin-independent manner through interactions at the N-termini of EPL2 monomers. Homodimers are further polymerized in a chitin-dependent manner.

The protein resides in the secreted. Secreted effector that enables the plant pathogenic fungus to manipulate host defenses for successful infection. Binds chitin oligomers and polymer with high affinity and plays a dual role, not only in the suppression of chitin-triggered immune responses, but also in appressorium function. Does not protect fungal hyphae against plant chitinases but suppresses chitin-triggered plant immune responses. Chitin-induced polymerization of homodimers forms a contiguous ELP2 highly oligomeric super-complexe that may precipitate at infection sites to eliminate chitin oligomers, and thus suppress the activation of chitin-induced plant immunity. This is Secreted LysM effector ELP2 from Colletotrichum higginsianum (strain IMI 349063) (Crucifer anthracnose fungus).